A 502-amino-acid chain; its full sequence is Arginine-specific demethylase JMJ22 (502 aa).

The disordered stretch occupies residues 15-45; the sequence is KSKSKRLKLHQHEPESLFPEKEVEEEDEDEG. Residues 24-35 show a composition bias toward basic and acidic residues; it reads HQHEPESLFPEK. One can recognise an F-box domain in the interval 80–126; sequence LGNLQILSDELVLDILGLLGANHLGVLATVTKSFYIFANHEPLWRNL. Residues 279-439 enclose the JmjC domain; the sequence is EKVPVLDSEY…NVLEFLKKPN (161 aa). Residues His324, Asp326, and His407 each coordinate Fe cation.

The protein belongs to the JARID1 histone demethylase family. Fe(2+) serves as cofactor. As to expression, expressed in inflorescences, roots and siliques, and, at low levels, in leaves and stems.

It is found in the nucleus. The catalysed reaction is N(omega),N(omega)-dimethyl-L-arginyl-[protein] + 2-oxoglutarate + O2 = N(omega)-methyl-L-arginyl-[protein] + formaldehyde + succinate + CO2. Its function is as follows. Histone demethylase that demethylates 'Arg-3' (H4R3me) of histone H4 with a specific activity for H4R3me2. Involved in the positive regulation of gene expression. Together with JMJ20, positively regulates seed germination by promoting the removal of repressive histone arginine methylations (e.g. H4R3me2) at GA3ox1 and GA3ox2 to trigger gibberellic acid (GA) biosynthesis. This Arabidopsis thaliana (Mouse-ear cress) protein is Arginine-specific demethylase JMJ22.